The following is a 1050-amino-acid chain: uncharacterized protein (1050 aa).

The Cytoplasmic portion of the chain corresponds to 1–83; that stretch reads MARLLTKSSQ…AVKLGTFEGC (83 aa). Phosphoserine is present on residues Ser9 and Ser60. A Phosphothreonine modification is found at Thr64. A helical membrane pass occupies residues 84 to 104; that stretch reads FIPTTLNVLSILLYLRFPWII. Over 105-112 the chain is Extracellular; the sequence is GEAGVLKT. A helical transmembrane segment spans residues 113-133; it reads LLMLFISYAVGIFTSLSISAI. The Cytoplasmic segment spans residues 134–146; the sequence is CTNGMVRGGGAYY. A helical transmembrane segment spans residues 147-169; it reads AVSRSIGPELGGSIGLIFYVGQI. Over 170–202 the chain is Extracellular; sequence LNTGMNISGFVEPIISIFGKESGTISQFLPEGY. Asn175 carries an N-linked (GlcNAc...) asparagine glycan. Residues 203–223 traverse the membrane as a helical segment; that stretch reads WWVFLYTTCVLAMCCILCCLG. Over 224–232 the chain is Cytoplasmic; that stretch reads SAIFAKASN. Residues 233–253 traverse the membrane as a helical segment; it reads ALFVVIILSTISIPISSIFVH. The Extracellular portion of the chain corresponds to 254–295; that stretch reads PFKDPSLLVHFTGLKWSTLMKNLASAYTENEKGTGYESFKST. Ser270 carries the phosphoserine modification. The residue at position 271 (Thr271) is a Phosphothreonine. A helical membrane pass occupies residues 296-316; the sequence is FGVFFPATAGLLAGASMSGDL. At 317–334 the chain is on the cytoplasmic side; sequence KAPSRSIPKGTISSQATT. Residues 335-355 form a helical membrane-spanning segment; it reads FLLYLLVILCVGASVTRTGLL. Over 356 to 368 the chain is Extracellular; sequence LDMDVMEHISLHP. Residues 369-389 form a helical membrane-spanning segment; the sequence is LFIISGILSSGAFSSFMGIFG. The Cytoplasmic portion of the chain corresponds to 390 to 417; that stretch reads AAKLLQAIARDDLIPGMFFFAKGSSYDD. A helical membrane pass occupies residues 418 to 438; sequence IPYVAIGVTYLITQISLFWDI. Residues 439-442 are Extracellular-facing; the sequence is NMLS. Residues 443-463 form a helical membrane-spanning segment; the sequence is SMITMTFLLTFGFINLSCFLL. Topologically, residues 464–480 are cytoplasmic; it reads RISSTPNFRPTFRYFNR. Residues 481-497 form a helical membrane-spanning segment; sequence RTTLVGTILSFGVMFYV. At 498–499 the chain is on the extracellular side; that stretch reads DR. A helical membrane pass occupies residues 500–520; sequence LNAFISFLIAGILVVVIYFTC. Over 521-1050 the chain is Cytoplasmic; sequence PPKNWGDVSQ…SKSLTITTAL (530 aa). At Ser901 the chain carries Phosphoserine. The disordered stretch occupies residues 915 to 943; sequence ETESSFGNRSLSPKQENRRTYSDSTIESS. The span at 916–928 shows a compositional bias: polar residues; the sequence is TESSFGNRSLSPK. Position 936 is a phosphoserine (Ser936). At Thr939 the chain carries Phosphothreonine.

This sequence belongs to the SLC12A transporter family.

The protein localises to the membrane. This is an uncharacterized protein from Schizosaccharomyces pombe (strain 972 / ATCC 24843) (Fission yeast).